We begin with the raw amino-acid sequence, 91 residues long: Small ribosomal subunit protein uS19 (91 aa).

It belongs to the universal ribosomal protein uS19 family.

Protein S19 forms a complex with S13 that binds strongly to the 16S ribosomal RNA. This chain is Small ribosomal subunit protein uS19, found in Verminephrobacter eiseniae (strain EF01-2).